The primary structure comprises 390 residues: Transforming growth factor beta-1 proprotein (390 aa).

The first 29 residues, 1 to 29, serve as a signal peptide directing secretion; the sequence is MPPSGLRLLPLLLPLLWLLVLTPSRPAAG. Residues 30–74 form a straightjacket domain region; sequence LSTCKTIDMELVKRKRIETIRGQILSKLRLASPPSQGEVPPGPLP. The segment at 75–271 is arm domain; sequence EAVLALYNST…ATPLERAQHL (197 aa). Residues Asn-82, Asn-136, and Asn-176 are each glycosylated (N-linked (GlcNAc...) asparagine). A bowtie tail region spans residues 226-252; sequence DSKDNTLQVDINGFTTGRRGDLATIHG. Positions 244–246 match the Cell attachment site motif; the sequence is RGD. 4 cysteine pairs are disulfide-bonded: Cys-285-Cys-294, Cys-293-Cys-356, Cys-322-Cys-387, and Cys-326-Cys-389.

The protein belongs to the TGF-beta family. As to quaternary structure, homodimer; disulfide-linked. Interacts with the serine proteases, HTRA1 and HTRA3: the interaction with either inhibits TGFB1-mediated signaling and the HTRA protease activity is required for this inhibition. May interact with THSD4; this interaction may lead to sequestration by FBN1 microfibril assembly and attenuation of TGFB signaling. Interacts with CD109, DPT and ASPN. Interacts with EFEMP2. Interacts with TSKU; the interaction contributes to regulation of the hair cycle. Interacts with TGFBR3. In terms of assembly, homodimer; disulfide-linked. Interacts with transforming growth factor beta-1 (TGF-beta-1) chain; interaction is non-covalent and maintains TGF-beta-1 in a latent state; each latency-associated peptide (LAP) monomer interacts with TGF-beta-1 in the other monomer. Interacts with LTBP1; leading to regulation of TGF-beta-1 activation. Interacts with LRRC32/GARP; leading to regulation of TGF-beta-1 activation on the surface of activated regulatory T-cells (Tregs). Interacts with LRRC33/NRROS; leading to regulation of TGF-beta-1 activation in macrophages and microglia. Interacts (via cell attachment site) with integrins ITGAV and ITGB6 (ITGAV:ITGB6), leading to release of the active TGF-beta-1. Interacts with NREP; the interaction results in a decrease in TGFB1 autoinduction. Interacts with HSP90AB1; inhibits latent TGFB1 activation. Homodimer; disulfide-linked. Interacts with TGF-beta receptors (TGFBR1 and TGFBR2), leading to signal transduction. In terms of processing, transforming growth factor beta-1 proprotein: The precursor proprotein is cleaved in the Golgi apparatus by FURIN to form Transforming growth factor beta-1 (TGF-beta-1) and Latency-associated peptide (LAP) chains, which remain non-covalently linked, rendering TGF-beta-1 inactive. Post-translationally, N-glycosylated. Deglycosylation leads to activation of Transforming growth factor beta-1 (TGF-beta-1); mechanisms triggering deglycosylation-driven activation of TGF-beta-1 are however unclear.

Its subcellular location is the secreted. The protein localises to the extracellular space. It localises to the extracellular matrix. Functionally, transforming growth factor beta-1 proprotein: Precursor of the Latency-associated peptide (LAP) and Transforming growth factor beta-1 (TGF-beta-1) chains, which constitute the regulatory and active subunit of TGF-beta-1, respectively. Required to maintain the Transforming growth factor beta-1 (TGF-beta-1) chain in a latent state during storage in extracellular matrix. Associates non-covalently with TGF-beta-1 and regulates its activation via interaction with 'milieu molecules', such as LTBP1, LRRC32/GARP and LRRC33/NRROS, that control activation of TGF-beta-1. Interaction with LRRC33/NRROS regulates activation of TGF-beta-1 in macrophages and microglia. Interaction with LRRC32/GARP controls activation of TGF-beta-1 on the surface of activated regulatory T-cells (Tregs). Interaction with integrins (ITGAV:ITGB6 or ITGAV:ITGB8) results in distortion of the Latency-associated peptide chain and subsequent release of the active TGF-beta-1. In terms of biological role, multifunctional protein that regulates the growth and differentiation of various cell types and is involved in various processes, such as normal development, immune function, microglia function and responses to neurodegeneration. Activation into mature form follows different steps: following cleavage of the proprotein in the Golgi apparatus, Latency-associated peptide (LAP) and Transforming growth factor beta-1 (TGF-beta-1) chains remain non-covalently linked rendering TGF-beta-1 inactive during storage in extracellular matrix. At the same time, LAP chain interacts with 'milieu molecules', such as LTBP1, LRRC32/GARP and LRRC33/NRROS that control activation of TGF-beta-1 and maintain it in a latent state during storage in extracellular milieus. TGF-beta-1 is released from LAP by integrins (ITGAV:ITGB6 or ITGAV:ITGB8): integrin-binding to LAP stabilizes an alternative conformation of the LAP bowtie tail and results in distortion of the LAP chain and subsequent release of the active TGF-beta-1. Once activated following release of LAP, TGF-beta-1 acts by binding to TGF-beta receptors (TGFBR1 and TGFBR2), which transduce signal. While expressed by many cells types, TGF-beta-1 only has a very localized range of action within cell environment thanks to fine regulation of its activation by Latency-associated peptide chain (LAP) and 'milieu molecules'. Plays an important role in bone remodeling: acts as a potent stimulator of osteoblastic bone formation, causing chemotaxis, proliferation and differentiation in committed osteoblasts. Can promote either T-helper 17 cells (Th17) or regulatory T-cells (Treg) lineage differentiation in a concentration-dependent manner. At high concentrations, leads to FOXP3-mediated suppression of RORC and down-regulation of IL-17 expression, favoring Treg cell development. At low concentrations in concert with IL-6 and IL-21, leads to expression of the IL-17 and IL-23 receptors, favoring differentiation to Th17 cells. Stimulates sustained production of collagen through the activation of CREB3L1 by regulated intramembrane proteolysis (RIP). Mediates SMAD2/3 activation by inducing its phosphorylation and subsequent translocation to the nucleus. Positively regulates odontoblastic differentiation in dental papilla cells, via promotion of IPO7-mediated translocation of phosphorylated SMAD2 to the nucleus and subsequent transcription of target genes. Can induce epithelial-to-mesenchymal transition (EMT) and cell migration in various cell types. The sequence is that of Transforming growth factor beta-1 proprotein (TGFB1) from Chlorocebus aethiops (Green monkey).